A 99-amino-acid chain; its full sequence is DNA-directed RNA polymerase subunit omega (99 aa).

Belongs to the RNA polymerase subunit omega family. The RNAP catalytic core consists of 2 alpha, 1 beta, 1 beta' and 1 omega subunit. When a sigma factor is associated with the core the holoenzyme is formed, which can initiate transcription.

It catalyses the reaction RNA(n) + a ribonucleoside 5'-triphosphate = RNA(n+1) + diphosphate. In terms of biological role, promotes RNA polymerase assembly. Latches the N- and C-terminal regions of the beta' subunit thereby facilitating its interaction with the beta and alpha subunits. This chain is DNA-directed RNA polymerase subunit omega, found in Xanthomonas oryzae pv. oryzae (strain MAFF 311018).